We begin with the raw amino-acid sequence, 203 residues long: MSIKYVATSKLPTPWGVFAMHGFEDTETGKEHVALTFGTLSADEPVLGRIHSECLTGDALFSLRCDCGFQLQTAMQNIAETGCGFILYLRQEGRGIGLLNKIRAYELQDKGANTVEANEQLGFPADMRKYDMIKPMLEQIGVKHVRLMTNNPRKVKAMKEFGIEVVERVPLQVGKNRYNEAYLKTKSTELGHMMSEYHFVDED.

49–53 (RIHSE) lines the GTP pocket. Positions 54, 65, and 67 each coordinate Zn(2+). Residues glutamine 70, 92–94 (EGR), and threonine 114 contribute to the GTP site. The active-site Proton acceptor is the aspartate 126. Residue arginine 128 is the Nucleophile of the active site. 2 residues coordinate GTP: threonine 149 and lysine 154.

This sequence belongs to the GTP cyclohydrolase II family. Zn(2+) serves as cofactor.

It carries out the reaction GTP + 4 H2O = 2,5-diamino-6-hydroxy-4-(5-phosphoribosylamino)-pyrimidine + formate + 2 phosphate + 3 H(+). It participates in cofactor biosynthesis; riboflavin biosynthesis; 5-amino-6-(D-ribitylamino)uracil from GTP: step 1/4. In terms of biological role, catalyzes the conversion of GTP to 2,5-diamino-6-ribosylamino-4(3H)-pyrimidinone 5'-phosphate (DARP), formate and pyrophosphate. The polypeptide is GTP cyclohydrolase-2 (Shewanella sp. (strain W3-18-1)).